We begin with the raw amino-acid sequence, 163 residues long: Large ribosomal subunit protein uL18 (163 aa).

The protein belongs to the universal ribosomal protein uL18 family. Part of the 50S ribosomal subunit. Contacts the 5S and 23S rRNAs.

In terms of biological role, this is one of the proteins that bind and probably mediate the attachment of the 5S RNA into the large ribosomal subunit, where it forms part of the central protuberance. The polypeptide is Large ribosomal subunit protein uL18 (Thermoplasma acidophilum (strain ATCC 25905 / DSM 1728 / JCM 9062 / NBRC 15155 / AMRC-C165)).